Reading from the N-terminus, the 328-residue chain is Malate dehydrogenase (328 aa).

Position 11–17 (11–17) interacts with NAD(+); that stretch reads GAAGQIG. Substrate is bound by residues arginine 94 and arginine 100. Residues asparagine 107, glutamine 114, and 131-133 contribute to the NAD(+) site; that span reads VGN. Residues asparagine 133 and arginine 164 each contribute to the substrate site. Histidine 189 (proton acceptor) is an active-site residue.

Belongs to the LDH/MDH superfamily. MDH type 2 family.

The catalysed reaction is (S)-malate + NAD(+) = oxaloacetate + NADH + H(+). In terms of biological role, catalyzes the reversible oxidation of malate to oxaloacetate. This is Malate dehydrogenase from Xylella fastidiosa (strain M12).